Reading from the N-terminus, the 317-residue chain is Metaxin-1 (317 aa).

Glycyl lysine isopeptide (Lys-Gly) (interchain with G-Cter in ubiquitin) cross-links involve residues Lys-38, Lys-41, and Lys-78. A helical transmembrane segment spans residues 164-184; the sequence is EELEKELYREARECLTLLSQR.

It belongs to the metaxin family. In terms of assembly, interacts with MTX2/metaxin-2. Associates with the mitochondrial contact site and cristae organizing system (MICOS) complex, composed of at least MICOS10/MIC10, CHCHD3/MIC19, CHCHD6/MIC25, APOOL/MIC27, IMMT/MIC60, APOO/MIC23/MIC26 and QIL1/MIC13. This complex was also known under the names MINOS or MitOS complex. The MICOS complex associates with mitochondrial outer membrane proteins SAMM50, MTX1 and MTX2 (together described as components of the mitochondrial outer membrane sorting assembly machinery (SAM) complex) and DNAJC11, mitochondrial inner membrane protein TMEM11 and with HSPA9. The MICOS and SAM complexes together with DNAJC11 are part of a large protein complex spanning both membranes termed the mitochondrial intermembrane space bridging (MIB) complex. Interacts with ARMC1. Post-translationally, ubiquitinated by PRKN during mitophagy, leading to its degradation and enhancement of mitophagy. Deubiquitinated by USP30.

Its subcellular location is the mitochondrion outer membrane. Functionally, involved in transport of proteins into the mitochondrion. Essential for embryonic development. The protein is Metaxin-1 (MTX1) of Macaca fascicularis (Crab-eating macaque).